We begin with the raw amino-acid sequence, 427 residues long: GPI mannosyltransferase 2 (427 aa).

Helical transmembrane passes span 7–27, 119–139, 164–184, 197–217, 247–267, 318–338, 350–370, and 404–424; these read LTTVFFTVKLVQYLLVYFAPG, ATLLNLVLHYVSVWLLYALTL, FLLAPYSEPLSFAFSFLGMLL, ITLAWYNWLPYTLSGICFSVA, AVLFPCIAGSMMLGIFAYMHY, VPNFLFALPNLVILWYSTVYF, LVYITRALLLIITFFAHVQII, and LYVNWLILWIPLQTVLFACFL.

It belongs to the PIGV family.

Its subcellular location is the endoplasmic reticulum membrane. Its pathway is glycolipid biosynthesis; glycosylphosphatidylinositol-anchor biosynthesis. Functionally, mannosyltransferase involved in glycosylphosphatidylinositol-anchor biosynthesis. Transfers the second mannose to the glycosylphosphatidylinositol during GPI precursor assembly. This is GPI mannosyltransferase 2 (GPI18) from Eremothecium gossypii (strain ATCC 10895 / CBS 109.51 / FGSC 9923 / NRRL Y-1056) (Yeast).